The chain runs to 303 residues: Recombination-associated protein RdgC (303 aa).

Belongs to the RdgC family.

The protein localises to the cytoplasm. The protein resides in the nucleoid. May be involved in recombination. This is Recombination-associated protein RdgC from Shewanella loihica (strain ATCC BAA-1088 / PV-4).